The sequence spans 260 residues: Neuraminyllactose-binding hemagglutinin (260 aa).

A signal peptide spans 1 to 27; that stretch reads MKTNGHFKDFAWKKCFLGASVVALLVG. C28 is lipidated: N-palmitoyl cysteine. The S-diacylglycerol cysteine moiety is linked to residue C28.

It is found in the cell outer membrane. This is Neuraminyllactose-binding hemagglutinin (hpaA) from Helicobacter pylori (strain J99 / ATCC 700824) (Campylobacter pylori J99).